A 353-amino-acid polypeptide reads, in one-letter code: MAATKRKRRGGFAVQAKKPKRNEIDAEPPAKRHATAEEVEEEERDRIPGPVCKGKWKNKERILIFSSRGINFRTRHLMQDLRMLMPHSKADTKMDRKDKLFVINEVCEMKNCNKCIYFEAKKKQDLYMWLSNSPHGPSAKFLVQNIHTLAELKMTGNCLKGSRPLLSFDPAFDELPHYALLKELLIQIFSTPRYHPKSQPFVDHVFTFTILDNRIWFRNFQIIEEDAALVEIGPRFVLNLIKIFQGSFGGPTLYENPHYQSPNMHRRVIRSITAAKYREKQQVKDVQKLRKKEPKTLLPHDPTADVFVTPAEEKPIEIQWVKPEPKVDLKARKKRIYKRQRKMKQRMDSGKTK.

A compositionally biased stretch (basic residues) spans 1 to 10 (MAATKRKRRG). The interval 1–46 (MAATKRKRRGGFAVQAKKPKRNEIDAEPPAKRHATAEEVEEEERDR) is disordered. Residues 21 to 36 (RNEIDAEPPAKRHATA) show a composition bias toward basic and acidic residues. One can recognise a Brix domain in the interval 60-249 (ERILIFSSRG…LIKIFQGSFG (190 aa)). A Glycyl lysine isopeptide (Lys-Gly) (interchain with G-Cter in SUMO2) cross-link involves residue Lys160. Ser261 bears the Phosphoserine mark. Residue Lys276 is modified to N6-acetyllysine. Residues Lys314 and Lys322 each participate in a glycyl lysine isopeptide (Lys-Gly) (interchain with G-Cter in SUMO2) cross-link.

The protein belongs to the BRX1 family.

The protein resides in the nucleus. It localises to the nucleolus. Its function is as follows. Required for biogenesis of the 60S ribosomal subunit. The sequence is that of Ribosome biogenesis protein BRX1 homolog (BRIX1) from Homo sapiens (Human).